Reading from the N-terminus, the 697-residue chain is Elongation factor G (697 aa).

The 276-residue stretch at E8–T283 folds into the tr-type G domain. GTP contacts are provided by residues A17–T24, D81–H85, and N135–D138.

It belongs to the TRAFAC class translation factor GTPase superfamily. Classic translation factor GTPase family. EF-G/EF-2 subfamily.

The protein resides in the cytoplasm. Functionally, catalyzes the GTP-dependent ribosomal translocation step during translation elongation. During this step, the ribosome changes from the pre-translocational (PRE) to the post-translocational (POST) state as the newly formed A-site-bound peptidyl-tRNA and P-site-bound deacylated tRNA move to the P and E sites, respectively. Catalyzes the coordinated movement of the two tRNA molecules, the mRNA and conformational changes in the ribosome. This Rickettsia rhipicephali protein is Elongation factor G.